A 237-amino-acid chain; its full sequence is Ribosomal RNA small subunit methyltransferase G (237 aa).

S-adenosyl-L-methionine-binding positions include G78, F83, 129–130 (AE), and R148. A disordered region spans residues 218–237 (KKETPRKYPRKAGTPNKKPL).

The protein belongs to the methyltransferase superfamily. RNA methyltransferase RsmG family.

The protein resides in the cytoplasm. Specifically methylates the N7 position of a guanine in 16S rRNA. In Streptococcus uberis (strain ATCC BAA-854 / 0140J), this protein is Ribosomal RNA small subunit methyltransferase G.